A 250-amino-acid chain; its full sequence is Testis-expressed protein 101 (250 aa).

The signal sequence occupies residues M1–N25. 4 N-linked (GlcNAc...) asparagine glycosylation sites follow: N45, N110, N134, and N160. Residues C141–F215 enclose the UPAR/Ly6 domain. A lipid anchor (GPI-anchor amidated glycine) is attached at G224. Positions A225–P250 are cleaved as a propeptide — removed in mature form.

In terms of assembly, interacts with VAMP3. Interacts with LY6K. Interacts with DPEP3; co-localized on the cell surface of spermatocytes, spermatids, and testicular spermatozoa, co-localized only in cytoplasmic droplets of caput and corpus epididymal sperm. Interacts with ADAM5. Post-translationally, N-glycosylated; by high mannose and/or biantennary complex and/or certain types of hybrid oligosaccharides; possesses different oligosaccharides chains according to its subcellular localization in the testis. Sheds from membrane raft by ACE and released from the cell surface of epididymal sperm while it passes through the caput epididymis leading to disappearance of TEX101 on spermatozoa; is essential to produce fertile spermatozoa. Detected in testis.

It localises to the cell membrane. The protein localises to the membrane raft. The protein resides in the cytoplasmic vesicle. Its subcellular location is the secretory vesicle. It is found in the acrosome. It localises to the secreted. Its function is as follows. Plays a role in fertilization by controlling binding of sperm to zona pellucida and migration of spermatozoa into the oviduct. May play a role in signal transduction and promote protein tyrosine phosphorylation. This Rattus norvegicus (Rat) protein is Testis-expressed protein 101.